Here is a 400-residue protein sequence, read N- to C-terminus: Enoyl-[acyl-carrier-protein] reductase [NADH] 1 (400 aa).

NAD(+) is bound by residues 48 to 53 (GSSSGY), 74 to 75 (FE), 111 to 112 (DA), and 139 to 140 (LA). Residue tyrosine 225 participates in substrate binding. Tyrosine 235 functions as the Proton donor in the catalytic mechanism. NAD(+)-binding positions include lysine 244 and 273 to 275 (VVT).

It belongs to the TER reductase family. As to quaternary structure, monomer.

It carries out the reaction a 2,3-saturated acyl-[ACP] + NAD(+) = a (2E)-enoyl-[ACP] + NADH + H(+). It participates in lipid metabolism; fatty acid biosynthesis. Involved in the final reduction of the elongation cycle of fatty acid synthesis (FAS II). Catalyzes the reduction of a carbon-carbon double bond in an enoyl moiety that is covalently linked to an acyl carrier protein (ACP). This chain is Enoyl-[acyl-carrier-protein] reductase [NADH] 1, found in Photobacterium profundum (strain SS9).